Reading from the N-terminus, the 107-residue chain is Thioredoxin 1 (107 aa).

Residues 2 to 107 form the Thioredoxin domain; it reads SVAAAVTDAT…TLANTLDKHL (106 aa). A disulfide bridge links cysteine 32 with cysteine 35.

Belongs to the thioredoxin family.

Participates in various redox reactions through the reversible oxidation of its active center dithiol to a disulfide and catalyzes dithiol-disulfide exchange reactions. In Synechococcus elongatus (strain ATCC 33912 / PCC 7942 / FACHB-805) (Anacystis nidulans R2), this protein is Thioredoxin 1 (trxA).